The sequence spans 160 residues: Arsenate reductase 2.1 (160 aa).

One can recognise a Rhodanese domain in the interval 42-143 (SNPRVAIIDV…WELSGQPVCR (102 aa)). C94 acts as the Cysteine persulfide intermediate in catalysis.

The catalysed reaction is [glutaredoxin]-dithiol + arsenate + glutathione + H(+) = glutathionyl-S-S-[glutaredoxin] + arsenite + H2O. Its function is as follows. Possesses arsenate reductase activity in vitro. Catalyzes the reduction of arsenate [As(V)] to arsenite [As(III)]. May play a role in arsenic retention in roots. Possesses phosphatase activity towards p-nitrophenyl phosphate in vitro. This chain is Arsenate reductase 2.1 (ACR2.1), found in Oryza sativa subsp. japonica (Rice).